The sequence spans 61 residues: MALKITQVKGLVGTKPKQRDSMRSLGLKRIGQTVVREDNPIVRGQINTVRHMVEVEEVAGE.

Belongs to the universal ribosomal protein uL30 family. In terms of assembly, part of the 50S ribosomal subunit.

This chain is Large ribosomal subunit protein uL30, found in Corynebacterium jeikeium (strain K411).